Here is a 339-residue protein sequence, read N- to C-terminus: Transcription factor IIIA (339 aa).

9 consecutive C2H2-type zinc fingers follow at residues Tyr-13–His-37, Phe-43–His-67, Phe-73–His-98, Tyr-105–His-129, Tyr-135–His-159, Tyr-162–His-188, Val-192–His-214, Tyr-221–His-246, and Phe-252–His-276. Composition is skewed to basic and acidic residues over residues Val-275–Pro-288 and Lys-305–Glu-316. The tract at residues Val-275 to Lys-339 is disordered.

As to expression, synthesized in oocytes and, in much lower levels, in somatic cells.

It localises to the nucleus. Involved in ribosomal large subunit biogenesis. Interacts with the internal control region (ICR) of approximately 50 bases within the 5S RNA genes, is required for correct transcription of these genes by RNA polymerase III. Also binds the transcribed 5S RNA's. In Xenopus borealis (Kenyan clawed frog), this protein is Transcription factor IIIA (gtf3a).